Here is a 202-residue protein sequence, read N- to C-terminus: Small ribosomal subunit protein uS4 (202 aa).

A disordered region spans residues 15-43; it reads LGDLPGLTRKAAKRSNPPGQHGNARRKRS. The S4 RNA-binding domain occupies 90–152; sequence GRLDNVCFRL…KGSKKLAEGN (63 aa).

The protein belongs to the universal ribosomal protein uS4 family. Part of the 30S ribosomal subunit. Contacts protein S5. The interaction surface between S4 and S5 is involved in control of translational fidelity.

In terms of biological role, one of the primary rRNA binding proteins, it binds directly to 16S rRNA where it nucleates assembly of the body of the 30S subunit. Its function is as follows. With S5 and S12 plays an important role in translational accuracy. The sequence is that of Small ribosomal subunit protein uS4 from Prochlorococcus marinus (strain SARG / CCMP1375 / SS120).